Consider the following 335-residue polypeptide: Aspartate--ammonia ligase (335 aa).

Belongs to the class-II aminoacyl-tRNA synthetase family. AsnA subfamily.

Its subcellular location is the cytoplasm. The catalysed reaction is L-aspartate + NH4(+) + ATP = L-asparagine + AMP + diphosphate + H(+). Its pathway is amino-acid biosynthesis; L-asparagine biosynthesis; L-asparagine from L-aspartate (ammonia route): step 1/1. The polypeptide is Aspartate--ammonia ligase (Pediococcus pentosaceus (strain ATCC 25745 / CCUG 21536 / LMG 10740 / 183-1w)).